A 148-amino-acid polypeptide reads, in one-letter code: Deoxyuridine 5'-triphosphate nucleotidohydrolase (148 aa).

Residues 67 to 69 (RSG), asparagine 80, 84 to 86 (LID), and methionine 94 each bind substrate.

This sequence belongs to the dUTPase family. The cofactor is Mg(2+).

The enzyme catalyses dUTP + H2O = dUMP + diphosphate + H(+). It participates in pyrimidine metabolism; dUMP biosynthesis; dUMP from dCTP (dUTP route): step 2/2. This enzyme is involved in nucleotide metabolism: it produces dUMP, the immediate precursor of thymidine nucleotides and it decreases the intracellular concentration of dUTP so that uracil cannot be incorporated into DNA. The protein is Deoxyuridine 5'-triphosphate nucleotidohydrolase of Burkholderia thailandensis (strain ATCC 700388 / DSM 13276 / CCUG 48851 / CIP 106301 / E264).